A 281-amino-acid chain; its full sequence is Pantothenate synthetase (281 aa).

29 to 36 (MGYLHEGH) contributes to the ATP binding site. H36 serves as the catalytic Proton donor. Q60 lines the (R)-pantoate pocket. Residue Q60 participates in beta-alanine binding. Residue 146-149 (GQKD) coordinates ATP. Position 152 (Q152) interacts with (R)-pantoate. ATP is bound by residues V175 and 183-186 (MSSR).

This sequence belongs to the pantothenate synthetase family. In terms of assembly, homodimer.

It is found in the cytoplasm. The catalysed reaction is (R)-pantoate + beta-alanine + ATP = (R)-pantothenate + AMP + diphosphate + H(+). Its pathway is cofactor biosynthesis; (R)-pantothenate biosynthesis; (R)-pantothenate from (R)-pantoate and beta-alanine: step 1/1. Its function is as follows. Catalyzes the condensation of pantoate with beta-alanine in an ATP-dependent reaction via a pantoyl-adenylate intermediate. The chain is Pantothenate synthetase from Pseudothermotoga lettingae (strain ATCC BAA-301 / DSM 14385 / NBRC 107922 / TMO) (Thermotoga lettingae).